The primary structure comprises 679 residues: MSDDDDKIYIYSDLFSKNFSDDEKDDSYEREKQVYSGSETQNAENEYSKLRAQNSTILNNYFDNDNIKNVENLKSNDPDQIDLILFPVNKNYYMNLFDGQLIENIHSIKLRKAGFYAIYVENNNNSKWDGIYFGLSRMQVELDYKLITKKNKDGGEYEKRNTSSYDNTESVQNTVGSEKEETENKNEETSNYNSNLNNEINKICKYNLDQTDILLDDSNSERRRNSKFKIKNTNYYDNLMLQNKYTNSILYDDDDDKNNTETYTCTFKTEDQIRVPSQKKKYIYLYNKYDNATLDLNVHTYMSLGMSILCKYSLLYCGKYNHIPRDPYTPFKKPVSILSLDGGGILTISTLLVLNRLEAELRKEIGSDDIKLIDCFDMVCGTSAGGLISLALLREIDLQDVSNMWPSTIKKVFEGNRNIISGIFFEGYDVNNVKDVFLERMGNKFMSSYKKFYCFVTATDVKHKPYKLFLIRNYTHKYNSINAESYDGINKVPLWLAAWATASAPTYLKGPSAEDIKKLGINIKPEIHLVDGALKASNPALIALEECARLNNKNLSTFIKEDLDTLVSIGTGQVPTKLTQSGASSKSASTFEILINSTHLLTRANDTHREVLQRLADRENTYFRFNVPHIGDIEIDSQDVRDFDLISKATQDYLFDEKFYEIKRLAHKLANNYIRSKYL.

Disordered regions lie at residues 19–45 (FSDD…NAEN) and 155–194 (GEYE…NYNS). Composition is skewed to polar residues over residues 35 to 45 (YSGSETQNAEN) and 162 to 176 (TSSY…NTVG). The span at 177-188 (SEKEETENKNEE) shows a compositional bias: basic and acidic residues. Residues 338–544 (LSLDGGGILT…KASNPALIAL (207 aa)) enclose the PNPLA domain. Positions 381-385 (GTSAG) match the GXSXG motif. Ser-383 (nucleophile) is an active-site residue. Asp-531 acts as the Proton acceptor in catalysis. Positions 531–533 (DGA) match the DGA/G motif.

It belongs to the patatin family.

The protein resides in the cytoplasm. The catalysed reaction is a 1,2-diacyl-sn-glycero-3-phosphocholine + H2O = a 1-acyl-sn-glycero-3-phosphocholine + a fatty acid + H(+). It carries out the reaction 1,2-dihexadecanoyl-sn-glycero-3-phosphocholine + H2O = 1-hexadecanoyl-sn-glycero-3-phosphocholine + hexadecanoate + H(+). Hydrolyzes the ester bond of the fatty acyl group attached at the sn-2 position of phospholipids such as phosphatidylcholine. Involved in gametogenesis; however, it is not clear whether it is involved in gametocytes development in host erythrocytes or in gametocyte activation in the mosquito midgut. Involved in gametocyte development in host erythrocytes; however, not involved in gametocytes activation including male gamete exflagellation. Involved in the rounding up of gametocytes following activation in the mosquito midgut; however, not required for gametocyte development in host erythrocytes. Required for exflagellation of activated male gametocytes. Involved in gametocytes egress from host erythrocytes by promoting the relocalization of perforin-like protein PLP2-containing vesicles to the periphery of gametocytes; PLP2 secretion is required for permeabilization of the erythrocyte membrane and thus, promotes gametocyte egress. Dispensable for asexual blood stage development. The protein is Patatin-like phospholipase 1 of Plasmodium falciparum (isolate NF54).